Consider the following 497-residue polypeptide: Delayed-rectifier potassium channel regulatory subunit KCNS1 (497 aa).

Residues Met1–Leu186 are Cytoplasmic-facing. The helical transmembrane segment at Pro187 to Ile208 threads the bilayer. The Extracellular segment spans residues His209–Pro239. A helical membrane pass occupies residues Val240 to Leu262. Topologically, residues Ala263 to Pro273 are cytoplasmic. A helical membrane pass occupies residues Leu274 to Ala291. Topologically, residues Gly292–Leu309 are extracellular. Residues Gly310–His330 traverse the membrane as a helical; Voltage-sensor segment. Residues Ser331–Tyr345 are Cytoplasmic-facing. A helical transmembrane segment spans residues Arg346–Tyr367. Topologically, residues Thr368–Ile379 are extracellular. The helical intramembrane region spans Pro380–Thr391. The Selectivity filter signature appears at Thr392–Asp397. The stretch at Thr392–Val399 is an intramembrane region. At Pro400 to Lys406 the chain is on the extracellular side. A helical transmembrane segment spans residues Leu407–Tyr435. Topologically, residues Arg436 to Tyr497 are cytoplasmic. The interval Ser464–Tyr497 is disordered. Positions Thr470 to Asp482 are enriched in basic and acidic residues.

Belongs to the potassium channel family. S (TC 1.A.1.2) subfamily. Kv9.1/KCNS1 sub-subfamily. As to quaternary structure, heterotetramer with KCNB1. Heterotetramer with KCNB2. Does not form homomultimers. Highly expressed in brain, but not in the other tissues tested.

The protein resides in the cell membrane. In terms of biological role, potassium channel regulatory subunit that modulate the delayed rectifier voltage-gated potassium channel activity of KCNB1 and KCNB2 by altering their kinetics, expression levels, and shifting the half-inactivation potential to more polarized values. While it does not form functional channels on its own, it can form functional heterotetrameric channels with KCNB1 and KCNB2. Each regulatory subunit has unique regulatory properties that can lead to extensive inhibition, significant changes in kinetics, and/or substantial shifts in the voltage dependencies of the inactivation process. The sequence is that of Delayed-rectifier potassium channel regulatory subunit KCNS1 from Rattus norvegicus (Rat).